The following is a 358-amino-acid chain: Peptide chain release factor 1 (358 aa).

An N5-methylglutamine modification is found at glutamine 233.

The protein belongs to the prokaryotic/mitochondrial release factor family. Post-translationally, methylated by PrmC. Methylation increases the termination efficiency of RF1.

The protein resides in the cytoplasm. Peptide chain release factor 1 directs the termination of translation in response to the peptide chain termination codons UAG and UAA. In Listeria monocytogenes serovar 1/2a (strain ATCC BAA-679 / EGD-e), this protein is Peptide chain release factor 1.